The following is a 238-amino-acid chain: MNKAILAVAMVLLLAGCATKPEEIGRAPDLSPVAAHLGMQNNPQFNGYPARPGKASYSLWDQRSSNFFKDPRAATPGDVLTVIISINDRANLDNKTDRERVSKGIYGGGGSFATSSITGAAAGGDMDASVNTHSDSKSKGKGTIERSEDIRLQIAAIVTDTLPNGNLIIRGSQEVRVNNELRVLNVAGVVRPRDISGNNTISYDKIAEARISYGGRGRLSEIQQPPYGQQILDQFSPF.

An N-terminal signal peptide occupies residues 1–16; the sequence is MNKAILAVAMVLLLAG. A lipid anchor (N-palmitoyl cysteine) is attached at cysteine 17. Cysteine 17 carries the S-diacylglycerol cysteine lipid modification.

It belongs to the FlgH family. In terms of assembly, the basal body constitutes a major portion of the flagellar organelle and consists of four rings (L,P,S, and M) mounted on a central rod.

It localises to the cell outer membrane. Its subcellular location is the bacterial flagellum basal body. Assembles around the rod to form the L-ring and probably protects the motor/basal body from shearing forces during rotation. This chain is Flagellar L-ring protein, found in Brucella melitensis biotype 2 (strain ATCC 23457).